The primary structure comprises 218 residues: CD99 antigen-like protein 2 (218 aa).

The first 25 residues, 1–25 (MVAWRSAFLVCLAFSLATLVQRGSG), serve as a signal peptide directing secretion. Residues 26–136 (DFDDFNLKDA…PGSGMVAETG (111 aa)) are Extracellular-facing. The tract at residues 72–128 (LADALDDRNDRDDGRRKPIAGGGGFSDKDLEDIVGGGEYKPDKGKGDGRYGSNDDPG) is disordered. Composition is skewed to basic and acidic residues over residues 76 to 87 (LDDRNDRDDGRR) and 110 to 119 (YKPDKGKGDG). Serine 129 is a glycosylation site (O-linked (Xyl...) (chondroitin sulfate) serine). The helical transmembrane segment at 137–157 (TIAGVASALAMALIGAVSSYI) threads the bilayer. Over 158–218 (SYQQKKFCFS…EPPPSEPARI (61 aa)) the chain is Cytoplasmic.

It belongs to the CD99 family. Post-translationally, O-glycosylated.

The protein resides in the cell membrane. Its subcellular location is the cell junction. The protein localises to the secreted. Functionally, plays a role in a late step of leukocyte extravasation helping cells to overcome the endothelial basement membrane. Acts at the same site as, but independently of, PECAM1. Homophilic adhesion molecule, but these interactions may not be required for cell aggregation. This chain is CD99 antigen-like protein 2 (CD99L2), found in Pongo abelii (Sumatran orangutan).